The primary structure comprises 313 residues: L-lactate dehydrogenase (313 aa).

NAD(+) contacts are provided by residues V11, D32, R37, Y62, and 76–77 (GV). Substrate is bound by residues Q79, R85, and 117 to 120 (NPVD). NAD(+)-binding positions include 115–117 (ASN) and S143. 148–151 (DTAR) serves as a coordination point for substrate. Positions 153 and 168 each coordinate beta-D-fructose 1,6-bisphosphate. The active-site Proton acceptor is H175. Phosphotyrosine is present on Y221. Substrate is bound at residue T230.

This sequence belongs to the LDH/MDH superfamily. LDH family. Homotetramer.

It localises to the cytoplasm. The enzyme catalyses (S)-lactate + NAD(+) = pyruvate + NADH + H(+). It participates in fermentation; pyruvate fermentation to lactate; (S)-lactate from pyruvate: step 1/1. With respect to regulation, allosterically activated by fructose 1,6-bisphosphate (FBP). Catalyzes the conversion of lactate to pyruvate. The chain is L-lactate dehydrogenase from Geotalea daltonii (strain DSM 22248 / JCM 15807 / FRC-32) (Geobacter daltonii).